A 581-amino-acid polypeptide reads, in one-letter code: NADP-dependent malic enzyme 1 (581 aa).

The active-site Proton donor is the Y129. R182 contacts NADP(+). Residue K200 is the Proton acceptor of the active site. Positions 272, 273, and 296 each coordinate a divalent metal cation. Residues D296, 325–341, and N437 each bind NADP(+); that span reads LFLGAGEAGTGIAELIA.

It belongs to the malic enzymes family. In terms of assembly, homohexamers and homooctamers. The cofactor is Mg(2+). It depends on Mn(2+) as a cofactor. Specifically expressed in roots (only in steles of secondary roots).

The protein localises to the cytoplasm. It carries out the reaction (S)-malate + NADP(+) = pyruvate + CO2 + NADPH. It catalyses the reaction oxaloacetate + H(+) = pyruvate + CO2. This Arabidopsis thaliana (Mouse-ear cress) protein is NADP-dependent malic enzyme 1 (NADP-ME1).